Here is a 375-residue protein sequence, read N- to C-terminus: MNTPVNLLDFDVDGLVDWFAGLGEKPFRARQVMRWMHREGCDDFDQMTDVAKSLRAKLKEIAVIRPPVPVRDSVSSDGTRKWLLDVGNANAVETVFIPETNRGTLCVSSQAGCALDCAFCSTGKQGFNRNLTAAEIIGQLWLANKLLGAARDAAADLEAGEKDNGRIISNVVMMGMGEPLANFDNVVTALRLMLDDHAYGLSRRRVTVSTSGIVPAIDRLRDECPVALAVSLHASNDALRDRLVPINQKYPLRELMAACQRYLERAPRDFITFEYVMLDGVNDQEAHARELIALVRDVPCKFNLIPFNPFPNSGFQRSNAERIRRFAGILLDAGIVTTTRKTRGDDVDAACGQLAGQVQDKTRRTVRLKQSMEVR.

Glu-93 serves as the catalytic Proton acceptor. Residues 99 to 346 enclose the Radical SAM core domain; the sequence is ETNRGTLCVS…TTTRKTRGDD (248 aa). Cys-106 and Cys-351 are disulfide-bonded. [4Fe-4S] cluster-binding residues include Cys-113, Cys-117, and Cys-120. S-adenosyl-L-methionine contacts are provided by residues 177-178, Ser-209, 231-233, and Asn-308; these read GE and SLH. Catalysis depends on Cys-351, which acts as the S-methylcysteine intermediate.

Belongs to the radical SAM superfamily. RlmN family. The cofactor is [4Fe-4S] cluster.

Its subcellular location is the cytoplasm. It carries out the reaction adenosine(2503) in 23S rRNA + 2 reduced [2Fe-2S]-[ferredoxin] + 2 S-adenosyl-L-methionine = 2-methyladenosine(2503) in 23S rRNA + 5'-deoxyadenosine + L-methionine + 2 oxidized [2Fe-2S]-[ferredoxin] + S-adenosyl-L-homocysteine. The catalysed reaction is adenosine(37) in tRNA + 2 reduced [2Fe-2S]-[ferredoxin] + 2 S-adenosyl-L-methionine = 2-methyladenosine(37) in tRNA + 5'-deoxyadenosine + L-methionine + 2 oxidized [2Fe-2S]-[ferredoxin] + S-adenosyl-L-homocysteine. Functionally, specifically methylates position 2 of adenine 2503 in 23S rRNA and position 2 of adenine 37 in tRNAs. m2A2503 modification seems to play a crucial role in the proofreading step occurring at the peptidyl transferase center and thus would serve to optimize ribosomal fidelity. The sequence is that of Dual-specificity RNA methyltransferase RlmN from Azoarcus sp. (strain BH72).